A 447-amino-acid chain; its full sequence is UPF0210 protein lhv_0606 (447 aa).

The protein belongs to the UPF0210 family. In terms of assembly, homodimer.

This is UPF0210 protein lhv_0606 from Lactobacillus helveticus (strain DPC 4571).